A 251-amino-acid chain; its full sequence is Imidazole glycerol phosphate synthase subunit HisF (251 aa).

Residues Asp-11 and Asp-130 contribute to the active site.

The protein belongs to the HisA/HisF family. Heterodimer of HisH and HisF.

The protein resides in the cytoplasm. The catalysed reaction is 5-[(5-phospho-1-deoxy-D-ribulos-1-ylimino)methylamino]-1-(5-phospho-beta-D-ribosyl)imidazole-4-carboxamide + L-glutamine = D-erythro-1-(imidazol-4-yl)glycerol 3-phosphate + 5-amino-1-(5-phospho-beta-D-ribosyl)imidazole-4-carboxamide + L-glutamate + H(+). It functions in the pathway amino-acid biosynthesis; L-histidine biosynthesis; L-histidine from 5-phospho-alpha-D-ribose 1-diphosphate: step 5/9. Its function is as follows. IGPS catalyzes the conversion of PRFAR and glutamine to IGP, AICAR and glutamate. The HisF subunit catalyzes the cyclization activity that produces IGP and AICAR from PRFAR using the ammonia provided by the HisH subunit. This Parabacteroides distasonis (strain ATCC 8503 / DSM 20701 / CIP 104284 / JCM 5825 / NCTC 11152) protein is Imidazole glycerol phosphate synthase subunit HisF.